Here is a 1450-residue protein sequence, read N- to C-terminus: Protein clueless (1450 aa).

Disordered regions lie at residues 1–126 (MALE…PGSE) and 266–287 (KTRP…VSEP). The segment covering 29–60 (NNSSAGKKQQQQQQPNQNQNLVNGNGNAADGP) has biased composition (low complexity). The span at 62 to 71 (AKKKGKKNRN) shows a compositional bias: basic residues. Phosphoserine is present on S271. Residues 425 to 667 (RAEDAFSSKL…RTFPPDVNFL (243 aa)) enclose the Clu domain. Composition is skewed to basic and acidic residues over residues 725–734 (KQSEKTEEKA) and 743–765 (KESS…EEKQ). Disordered regions lie at residues 725–775 (KQSE…TKTA) and 959–1011 (PAVS…SDWT). Residues 968–983 (KKRSNGNKHNKHKSKG) show a composition bias toward basic residues. Over residues 984-1008 (NKQQASGNQNGSSAGSSSGGSSSSS) the composition is skewed to low complexity. TPR repeat units lie at residues 1102 to 1135 (AYNF…LNNV), 1228 to 1261 (ALID…NIKY), and 1263 to 1296 (GSKA…EKET). A disordered region spans residues 1410 to 1450 (NNNGDTEAETKDATKDNKDLAGASTQLTNGDKDAETAVASS). Residues 1417-1428 (AETKDATKDNKD) are compositionally biased toward basic and acidic residues.

Belongs to the CLU family.

It is found in the cytoplasm. Its function is as follows. mRNA-binding protein involved in proper cytoplasmic distribution of mitochondria. The chain is Protein clueless from Drosophila ananassae (Fruit fly).